The following is a 151-amino-acid chain: Small ribosomal subunit protein uS15 (151 aa).

Positions 1-20 (MARLHSGKRGSSGSTRPLRT) are disordered.

Belongs to the universal ribosomal protein uS15 family. As to quaternary structure, part of the 30S ribosomal subunit.

In Methanococcus aeolicus (strain ATCC BAA-1280 / DSM 17508 / OCM 812 / Nankai-3), this protein is Small ribosomal subunit protein uS15.